Here is a 178-residue protein sequence, read N- to C-terminus: UPF0098 protein PYRAB11530 (178 aa).

The first 22 residues, 1 to 22 (MRYLVPLLVFMVLGMGCLGGGG), serve as a signal peptide directing secretion.

This sequence belongs to the UPF0098 family.

The chain is UPF0098 protein PYRAB11530 from Pyrococcus abyssi (strain GE5 / Orsay).